Consider the following 207-residue polypeptide: MTELTKRQSEIYEYIKTVVHTKGYPPSVREIGEAVGLASSSTVHGHLSRLESKGYIRRDPTKPRAIEIVSDQLEENAEMEGTIHVPVIGKVTAGVPITAVENIEEYFPLPEHLTSTHNSDIFILNVVGDSMIEAGILDGDKVIVRSQTIAENGDIIVAMTEDDEATVKRFYKEKHRYRLQPENSTMDPIYLEQVTVLGKVVGLFREL.

Positions 28–48 (VREIGEAVGLASSSTVHGHLS) form a DNA-binding region, H-T-H motif. Active-site for autocatalytic cleavage activity residues include S130 and K168.

It belongs to the peptidase S24 family. Homodimer.

It catalyses the reaction Hydrolysis of Ala-|-Gly bond in repressor LexA.. In terms of biological role, represses a number of genes involved in the response to DNA damage (SOS response), including recA and lexA. In the presence of single-stranded DNA, RecA interacts with LexA causing an autocatalytic cleavage which disrupts the DNA-binding part of LexA, leading to derepression of the SOS regulon and eventually DNA repair. The protein is LexA repressor of Staphylococcus carnosus (strain TM300).